A 235-amino-acid chain; its full sequence is Transcription factor hepR (235 aa).

The interval 14–45 (QNSPESSRDVLSMASPGLLPIDPSPEHDETNK) is disordered. The C2H2-type zinc finger occupies 175 to 205 (IQCPCLDERGERCSRMFSRLDNMRDHVRRIH).

The protein resides in the nucleus. Functionally, transcription factor; part of the gene cluster that mediates the biosynthesis of heptelidic acid (HA), a sesquiterpene lactone that acts as an inhibitor of glyceraldehyde-3-phosphatedehydrogenase (GAPDH) and a growth inhibitor of the salt-tolerant lactic acid bacteria in soy sauce brewing. Both hepR and hepS regulate the transcription of the heptelidic acid cluster, but they are not involved in mutual transcriptional regulation and act with different mechanisms. The polypeptide is Transcription factor hepR (Aspergillus oryzae (strain ATCC 42149 / RIB 40) (Yellow koji mold)).